A 465-amino-acid chain; its full sequence is FAD-dependent monooxygenase pyr5 (465 aa).

Positions 1–16 (MRVLIIGGSIAGLTLA) are cleaved as a signal peptide. FAD contacts are provided by E30, G44, and R103. The active site involves Y210. FAD contacts are provided by D306 and A319. Residues 440–456 (PTFPLTVAGLCLVAIVI) form a helical membrane-spanning segment.

Belongs to the paxM FAD-dependent monooxygenase family. Requires FAD as cofactor.

The protein resides in the membrane. It catalyses the reaction 4-hydroxy-3-[(2E,6E)-farnesyl]-6-(pyridin-3-yl)-2H-pyran-2-one + NADPH + O2 + H(+) = 2-oxo-3-[(8S)-epoxy-(2E,6E)-farnesyl]-6-(pyridin-3-yl)-2H-pyran-4-olate + NADP(+) + H2O. It participates in secondary metabolite biosynthesis; terpenoid biosynthesis. Functionally, FAD-dependent monooxygenase; part of the gene cluster that mediates the biosynthesis of pyripyropene A, a specific human acyl-coenzyme A:cholesterol acyltransferase 2 inhibitor. The first step of the pathway is the synthesis of nicotinyl-CoA from nicotinic acid by the nicotinic acid-CoA ligase pyr1. Nicotinyl-CoA is then a substrate of polyketide synthase pyr2 to produce 4-hydroxy-6-(3-pyridinyl)-2H-pyran-2-one (HPPO) which is further prenylated by the polyprenyl transferase pyr6 to yield farnesyl-HPPO. The next steps consist of an epoxidation of farnesyl-HPPO to epoxyfarnesyl-HPPO by FAD-dependent monooxygenase pyr5 and a cyclization of the terpenoid portion by the terpene cyclase pyr4 to yield deacetyl-pyripyropene E. The 2 cytochrome P450 monooxygenases pyr3 and pyr9, and the 2 acetyltransferases pyr7 and pyr8 are involved in the conversion of deacetyl-pyripyropene E into pyripyropene A through several cycles of oxidation and acetylation steps. Pyr7 acetylates deacetyl-pyripyropene E to pyripyropene E which is oxidized to 11-deacetyl-pyripyropene O by pyr3, which is in turn acetylated into pyripyropene O by pyr8. Pyripyropene O is then oxidized to deacetyl-pyripyropene A by pyr9. Deacetyl-pyripyropene A is finally acetylated to pyripyropene A by pyr8. The sequence is that of FAD-dependent monooxygenase pyr5 from Aspergillus fumigatus (strain ATCC MYA-4609 / CBS 101355 / FGSC A1100 / Af293) (Neosartorya fumigata).